The primary structure comprises 408 residues: Serine/threonine transporter SstT (408 aa).

9 helical membrane passes run 19 to 39 (SLVSQIIVAIILASLLAVISP), 48 to 68 (LGSLFVNALKAVAPILVLVLV), 86 to 106 (IVGLYFLGTLSAALVAVLLSF), 143 to 163 (VTAVASGNFIAVLAWGLGLGF), 193 to 213 (FAPLGIFGLVANTIATTGFSA), 223 to 243 (VLLSAMLIIALLVNPLIVFII), 294 to 314 (IPLGATINMAGAAITITVLTL), 322 to 342 (IEVSFATAILLSVVASISACG), and 367 to 387 (VAMQVVAIGFIIGVIQDSAET).

Belongs to the dicarboxylate/amino acid:cation symporter (DAACS) (TC 2.A.23) family.

The protein resides in the cell inner membrane. The enzyme catalyses L-serine(in) + Na(+)(in) = L-serine(out) + Na(+)(out). It catalyses the reaction L-threonine(in) + Na(+)(in) = L-threonine(out) + Na(+)(out). In terms of biological role, involved in the import of serine and threonine into the cell, with the concomitant import of sodium (symport system). This Colwellia psychrerythraea (strain 34H / ATCC BAA-681) (Vibrio psychroerythus) protein is Serine/threonine transporter SstT.